The following is a 577-amino-acid chain: Adenine deaminase (577 aa).

It belongs to the metallo-dependent hydrolases superfamily. Adenine deaminase family. Mn(2+) serves as cofactor.

The catalysed reaction is adenine + H2O + H(+) = hypoxanthine + NH4(+). The polypeptide is Adenine deaminase (adeC) (Bacillus subtilis (strain 168)).